The primary structure comprises 333 residues: Procathepsin L (333 aa).

The N-terminal stretch at 1-17 (MNPTFILAALCLGIASA) is a signal peptide. A propeptide spans 18 to 113 (TLTFNHSLEA…KVFQEPLFYE (96 aa)) (activation peptide). A Zn(2+)-binding site is contributed by E122. Intrachain disulfides connect C135–C178 and C169–C211. Residue C138 is part of the active site. 10 residues coordinate Zn(2+): E163, D184, E199, E205, E209, D227, D250, H253, D273, and D275. C269 and C322 form a disulfide bridge. The active site involves H276. Residues 289–291 (ESD) constitute a propeptide that is removed on maturation. Residue N300 is part of the active site.

This sequence belongs to the peptidase C1 family. As to quaternary structure, dimer of a heavy and a light chain linked by disulfide bonds. Interacts with Long isoform of CD74/Ii chain; the interaction stabilizes the conformation of mature CTSL. During export along the endocytic pathway, pro-CTSL undergoes several proteolytic cleavages to generate the CTSL single-chain and two-chain mature forms, composed of a heavy chain linked to a light chain by disulfide bonds. Autocleavage; produces the single-chain CTSL after cleavage of the propeptide. The cleavage can be intermolecular.

The protein resides in the lysosome. Its subcellular location is the apical cell membrane. It is found in the cytoplasmic vesicle. The protein localises to the secretory vesicle. It localises to the chromaffin granule. The protein resides in the secreted. Its subcellular location is the extracellular space. The enzyme catalyses Specificity close to that of papain. As compared to cathepsin B, cathepsin L exhibits higher activity toward protein substrates, but has little activity on Z-Arg-Arg-NHMec, and no peptidyl-dipeptidase activity.. With respect to regulation, inhibited by the propeptide produced by autocleavage. Long isoform of CD74/Ii chain stabilizes the conformation of mature CTSL by binding to its active site and serving as a chaperone to help maintain a pool of mature enzyme in endocytic compartments and extracellular space of APCs. IFNG enhances the conversion into the CTSL mature and active form. Inhibited by CST6. Inhibited by the glycopeptide antibiotic teicoplanin. Inhibited by amantadine. Thiol protease important for the overall degradation of proteins in lysosomes. Plays a critical for normal cellular functions such as general protein turnover, antigen processing and bone remodeling. Involved in the solubilization of cross-linked TG/thyroglobulin and in the subsequent release of thyroid hormone thyroxine (T4) by limited proteolysis of TG/thyroglobulin in the thyroid follicle lumen. In neuroendocrine chromaffin cells secretory vesicles, catalyzes the prohormone proenkephalin processing to the active enkephalin peptide neurotransmitter. In thymus, regulates CD4(+) T cell positive selection by generating the major histocompatibility complex class II (MHCII) bound peptide ligands presented by cortical thymic epithelial cells. Also mediates invariant chain processing in cortical thymic epithelial cells. Major elastin-degrading enzyme at neutral pH. Accumulates as a mature and active enzyme in the extracellular space of antigen presenting cells (APCs) to regulate degradation of the extracellular matrix in the course of inflammation. Secreted form generates endostatin from COL18A1. Critical for cardiac morphology and function. Plays an important role in hair follicle morphogenesis and cycling, as well as epidermal differentiation. Required for maximal stimulation of steroidogenesis by TIMP1. The chain is Procathepsin L (CTSL) from Chlorocebus aethiops (Green monkey).